The following is a 161-amino-acid chain: Large ribosomal subunit protein uL15 (161 aa).

Residues M1–G43 are disordered. A compositionally biased stretch (gly residues) spans R21–G37.

This sequence belongs to the universal ribosomal protein uL15 family. As to quaternary structure, part of the 50S ribosomal subunit.

In terms of biological role, binds to the 23S rRNA. The chain is Large ribosomal subunit protein uL15 from Rhodopseudomonas palustris (strain HaA2).